A 313-amino-acid chain; its full sequence is Probable RuBisCO transcriptional regulator (313 aa).

Positions F6–T63 constitute an HTH lysR-type domain. The segment at residues F23–Q42 is a DNA-binding region (H-T-H motif).

It belongs to the LysR transcriptional regulatory family.

The protein localises to the plastid. The protein resides in the chloroplast. Its function is as follows. Trans-acting transcriptional regulator of RuBisCO genes (rbcL and rbcS) expression. In Chlorokybus atmophyticus (Soil alga), this protein is Probable RuBisCO transcriptional regulator (rbcR).